The primary structure comprises 1021 residues: Sodium/potassium-transporting ATPase subunit alpha-1 (1021 aa).

The propeptide occupies 1–5 (MGKGV). Basic and acidic residues predominate over residues 1 to 11 (MGKGVGRDKYE). A disordered region spans residues 1–36 (MGKGVGRDKYEPAAVSEHGDKKKAKKERDMDELKKE). Topologically, residues 6 to 85 (GRDKYEPAAV…NALTPPPTTP (80 aa)) are cytoplasmic. Lysine 9 carries the post-translational modification N6-acetyllysine. Phosphotyrosine is present on tyrosine 10. At serine 16 the chain carries Phosphoserine; by PKC. Lysine 21 bears the N6-acetyllysine mark. Residues 26–36 (KERDMDELKKE) are compositionally biased toward basic and acidic residues. Phosphoserine occurs at positions 38 and 45. Residues 80 to 82 (PPP) are phosphoinositide-3 kinase binding. A helical transmembrane segment spans residues 86 to 106 (EWVKFCRQLFGGFSMLLWIGA). The Extracellular portion of the chain corresponds to 107–129 (VLCFLAYGIQAATEEEPQNDNLY). The chain crosses the membrane as a helical span at residues 130 to 150 (LGVVLSAVVIITGCFSYYQEA). Residues 151-286 (KSSKIMESFK…GGQTPIAAEI (136 aa)) lie on the Cytoplasmic side of the membrane. Serine 226 is subject to Phosphoserine. Tyrosine 258 carries the phosphotyrosine modification. Residues 287–306 (EHFIHIITGVAVFLGVSFFI) form a helical membrane-spanning segment. Residues 307 to 318 (LSLILEYTWLEA) are Extracellular-facing. A helical membrane pass occupies residues 319–336 (VIFLIGIIVANVPEGLLA). The Cytoplasmic portion of the chain corresponds to 337–770 (TVTVCLTLTA…EEGRLIFDNL (434 aa)). The active-site 4-aspartylphosphate intermediate is aspartate 374. 2 positions are modified to phosphoserine: serine 450 and serine 482. Residue lysine 485 participates in ATP binding. Tyrosine 540 is subject to Phosphotyrosine. A mediates interaction with SCN7A region spans residues 594 to 715 (RAAVPDAVGK…QGAIVAVTGD (122 aa)). At serine 666 the chain carries Phosphoserine. Mg(2+) is bound by residues aspartate 715 and aspartate 719. Residues 771-790 (KKSIAYTLTSNIPEITPFLI) form a helical membrane-spanning segment. At 791–800 (FIIANIPLPL) the chain is on the extracellular side. The chain crosses the membrane as a helical span at residues 801 to 821 (GTVTILCIDLGTDMVPAISLA). Residues 822 to 841 (YEQAESDIMKRQPRNPQTDK) are Cytoplasmic-facing. Residues 842–864 (LVNERLISMAYGQIGMIQALGGF) traverse the membrane as a helical segment. Topologically, residues 865 to 916 (FTYFVIMAENGFLPNHLLGIRVTWDDRWINDVEDSYGQQWTYEQRKIVEFTC) are extracellular. The chain crosses the membrane as a helical span at residues 917-936 (HTAFFVSIVVVQWADLVICK). Over 937 to 949 (TRRNSVFQQGMKN) the chain is Cytoplasmic. Residue serine 941 is modified to Phosphoserine; by PKA. Residues 950 to 968 (KILIFGLFEETALAAFLSY) traverse the membrane as a helical segment. Residues 969 to 983 (CPGMGVALRMYPLKP) are Extracellular-facing. The chain crosses the membrane as a helical span at residues 984–1004 (TWWFCAFPYSLLIFVYDEVRK). Topologically, residues 1005-1021 (LIIRRRPGGWVEKETYY) are cytoplasmic.

This sequence belongs to the cation transport ATPase (P-type) (TC 3.A.3) family. Type IIC subfamily. The sodium/potassium-transporting ATPase is composed of a catalytic alpha subunit, an auxiliary non-catalytic beta subunit and an additional regulatory subunit. Interacts with regulatory subunit FXYD1. Interacts with regulatory subunit FXYD3. Interacts with SIK1. Interacts with SLC35G1 and STIM1. Interacts with CLN3; this interaction regulates the sodium/potassium-transporting ATPase complex localization at the plasma membrane. Interacts with SCN7A; activates ATP1A1 P-type sodium:potassium-exchanging transporter activity which indirectly signals to nearby neurons to regulate sodium homeostasis. Post-translationally, phosphorylation on Tyr-10 modulates pumping activity. Phosphorylation of Ser-941 by PKA modulates the response of ATP1A1 to PKC. Dephosphorylation by protein phosphatase 2A (PP2A) following increases in intracellular sodium, leading to increase catalytic activity.

The protein resides in the cell membrane. The protein localises to the basolateral cell membrane. It localises to the sarcolemma. It is found in the cell projection. Its subcellular location is the axon. The protein resides in the melanosome. It carries out the reaction K(+)(out) + Na(+)(in) + ATP + H2O = K(+)(in) + Na(+)(out) + ADP + phosphate + H(+). Functionally, this is the catalytic component of the active enzyme, which catalyzes the hydrolysis of ATP coupled with the exchange of sodium and potassium ions across the plasma membrane. This action creates the electrochemical gradient of sodium and potassium ions, providing the energy for active transport of various nutrients. Could also be part of an osmosensory signaling pathway that senses body-fluid sodium levels and controls salt intake behavior as well as voluntary water intake to regulate sodium homeostasis. In Bos taurus (Bovine), this protein is Sodium/potassium-transporting ATPase subunit alpha-1 (ATP1A1).